The following is a 255-amino-acid chain: 5-oxoprolinase subunit A (255 aa).

It belongs to the LamB/PxpA family. Forms a complex composed of PxpA, PxpB and PxpC.

The catalysed reaction is 5-oxo-L-proline + ATP + 2 H2O = L-glutamate + ADP + phosphate + H(+). Catalyzes the cleavage of 5-oxoproline to form L-glutamate coupled to the hydrolysis of ATP to ADP and inorganic phosphate. The polypeptide is 5-oxoprolinase subunit A (Pyrococcus furiosus (strain ATCC 43587 / DSM 3638 / JCM 8422 / Vc1)).